The sequence spans 204 residues: Molybdenum cofactor guanylyltransferase (204 aa).

Residues L10–G12, K23, N51, D69, and D99 each bind GTP. D99 is a binding site for Mg(2+).

Belongs to the MobA family. As to quaternary structure, monomer. Mg(2+) serves as cofactor.

Its subcellular location is the cytoplasm. It carries out the reaction Mo-molybdopterin + GTP + H(+) = Mo-molybdopterin guanine dinucleotide + diphosphate. Its function is as follows. Transfers a GMP moiety from GTP to Mo-molybdopterin (Mo-MPT) cofactor (Moco or molybdenum cofactor) to form Mo-molybdopterin guanine dinucleotide (Mo-MGD) cofactor. This is Molybdenum cofactor guanylyltransferase from Shewanella piezotolerans (strain WP3 / JCM 13877).